Here is a 175-residue protein sequence, read N- to C-terminus: ATP-dependent protease subunit HslV (175 aa).

The active site involves threonine 2. 3 residues coordinate Na(+): glycine 158, cysteine 161, and threonine 164.

It belongs to the peptidase T1B family. HslV subfamily. A double ring-shaped homohexamer of HslV is capped on each side by a ring-shaped HslU homohexamer. The assembly of the HslU/HslV complex is dependent on binding of ATP.

The protein localises to the cytoplasm. It carries out the reaction ATP-dependent cleavage of peptide bonds with broad specificity.. Allosterically activated by HslU binding. Its function is as follows. Protease subunit of a proteasome-like degradation complex believed to be a general protein degrading machinery. The chain is ATP-dependent protease subunit HslV from Haemophilus influenzae (strain 86-028NP).